The primary structure comprises 166 residues: Specificity protein transcription factor 2 (166 aa).

The interval 17–45 is disordered; it reads SYHHSLPSISPPDSPASTSASSSSSSIGA. A compositionally biased stretch (low complexity) spans 31–42; the sequence is PASTSASSSSSS. 3 consecutive C2H2-type zinc fingers follow at residues 77–101, 107–131, and 137–160; these read HLCSVPGCGKTYKKTSHLRAHLRKH, FVCDWFDCGKRFDRSDQLIRHKRTH, and FACKFCIRQFSRSDHLQQHLTSVH.

The protein belongs to the Sp1 C2H2-type zinc-finger protein family.

Its function is as follows. Transcription factor. Probably acts downstream of the Wnt signaling pathway. This chain is Specificity protein transcription factor 2, found in Caenorhabditis elegans.